Here is a 301-residue protein sequence, read N- to C-terminus: Glycine--tRNA ligase alpha subunit (301 aa).

Belongs to the class-II aminoacyl-tRNA synthetase family. As to quaternary structure, tetramer of two alpha and two beta subunits.

The protein localises to the cytoplasm. It catalyses the reaction tRNA(Gly) + glycine + ATP = glycyl-tRNA(Gly) + AMP + diphosphate. This Pseudoalteromonas atlantica (strain T6c / ATCC BAA-1087) protein is Glycine--tRNA ligase alpha subunit.